We begin with the raw amino-acid sequence, 510 residues long: Major facilitator superfamily domain-containing protein 8 (510 aa).

Residues 1–38 are Cytoplasmic-facing; the sequence is MASIDDDDDERTPLLQDSHIGELVETQKQLKSRWWSIR. Residues 14–15 carry the Dileucine internalization motif motif; it reads LL. Residues 39–59 form a helical membrane-spanning segment; that stretch reads VMYLTMFLSSVGFSIVMTSIW. The Extracellular portion of the chain corresponds to 60–72; that stretch reads PYLQKVDQSADAS. The chain crosses the membrane as a helical span at residues 73 to 93; the sequence is FLGWVIASFSLGQMVASPLFG. Residues 94-103 are Cytoplasmic-facing; sequence LWSNHRPRRE. The helical transmembrane segment at 104-124 threads the bilayer; that stretch reads PLVVSITILVAASCLYAYVHV. Residues 125 to 132 lie on the Extracellular side of the membrane; the sequence is PASHNKYY. The chain crosses the membrane as a helical span at residues 133 to 155; the sequence is MLLARTFVGFGSGNVAVVRSYVA. The Cytoplasmic portion of the chain corresponds to 156 to 171; sequence GATSLSERTGAMANIS. The helical transmembrane segment at 172–192 threads the bilayer; it reads AFQAMGFILGPAFQAALSVIG. Residues 193-209 lie on the Extracellular side of the membrane; the sequence is ETGITINGISLQVNMYT. Residues 210–230 traverse the membrane as a helical segment; the sequence is APALMGALLGIGNIILIFAIF. The Cytoplasmic segment spans residues 231 to 264; it reads REHRVDDLEKNVSSINSESEVTDVEKANEGPIDQ. Residues 265–285 form a helical membrane-spanning segment; it reads IAVISSNILFFVVLFVFAIFE. Residues 286–302 lie on the Extracellular side of the membrane; that stretch reads TISTPLTMDMYAWTRTQ. Residues 303-323 form a helical membrane-spanning segment; it reads AVFYNGIILAAVGVESVIVFL. Residues 324–335 are Cytoplasmic-facing; sequence TVKILCKKTGER. The helical transmembrane segment at 336 to 356 threads the bilayer; it reads VLLLGGLAVIWIGFFILLPWG. Over 357 to 406 the chain is Extracellular; it reads NQMPKIQWTDLQNATIHNTTQWTSSIPSSGNHSVEPTGCPVIQTWCLYTP. Residues Asn369 and Asn374 are each glycosylated (N-linked (GlcNAc...) asparagine). Residues 407–427 form a helical membrane-spanning segment; that stretch reads VIHLAQYLTSDILIGVGYPIC. Residues 428-445 are Cytoplasmic-facing; it reads NVMSYTLYSKIIGPKPQG. A helical transmembrane segment spans residues 446-466; that stretch reads LYMGWLTAAGSAARTLGPVFV. The Extracellular segment spans residues 467–476; it reads SQIYTHLGTR. The helical transmembrane segment at 477-497 threads the bilayer; it reads WTFGIICAFVALSLLHLTAVY. Over 498–510 the chain is Cytoplasmic; that stretch reads KRLIPFSTRYERL.

The protein belongs to the major facilitator superfamily.

Its subcellular location is the lysosome membrane. Its function is as follows. May be a carrier that transport small solutes by using chemiosmotic ion gradients. The protein is Major facilitator superfamily domain-containing protein 8 (mfsd8) of Xenopus laevis (African clawed frog).